A 289-amino-acid polypeptide reads, in one-letter code: Acetyl-coenzyme A carboxylase carboxyl transferase subunit beta (289 aa).

The 262-residue stretch at 28 to 289 (VMTKCPKCKK…QGGEMAVWQS (262 aa)) folds into the CoA carboxyltransferase N-terminal domain. Cysteine 32, cysteine 35, cysteine 51, and cysteine 54 together coordinate Zn(2+). The segment at 32 to 54 (CPKCKKIMYTKELLKNLKVCVNC) adopts a C4-type zinc-finger fold.

It belongs to the AccD/PCCB family. Acetyl-CoA carboxylase is a heterohexamer composed of biotin carboxyl carrier protein (AccB), biotin carboxylase (AccC) and two subunits each of ACCase subunit alpha (AccA) and ACCase subunit beta (AccD). Zn(2+) is required as a cofactor.

The protein localises to the cytoplasm. The enzyme catalyses N(6)-carboxybiotinyl-L-lysyl-[protein] + acetyl-CoA = N(6)-biotinyl-L-lysyl-[protein] + malonyl-CoA. Its pathway is lipid metabolism; malonyl-CoA biosynthesis; malonyl-CoA from acetyl-CoA: step 1/1. Functionally, component of the acetyl coenzyme A carboxylase (ACC) complex. Biotin carboxylase (BC) catalyzes the carboxylation of biotin on its carrier protein (BCCP) and then the CO(2) group is transferred by the transcarboxylase to acetyl-CoA to form malonyl-CoA. The sequence is that of Acetyl-coenzyme A carboxylase carboxyl transferase subunit beta from Bacillus cereus (strain ATCC 10987 / NRS 248).